We begin with the raw amino-acid sequence, 173 residues long: Alpha-crystallin A chain (173 aa).

Met-1 bears the N-acetylmethionine mark. The segment at 1–63 (MDIAIQHPWF…RTVLDSGISE (63 aa)) is required for complex formation with BFSP1 and BFSP2. Gln-6 is modified (deamidated glutamine; partial). Lys-11 carries N-linked (Glc) (glycation) lysine glycosylation. Position 45 is a phosphoserine (Ser-45). The residue at position 50 (Gln-50) is a Deamidated glutamine; partial. The sHSP domain maps to 52–162 (LFRTVLDSGI…GHSERAIPVS (111 aa)). The residue at position 70 (Lys-70) is an N6-acetyllysine. A glycan (N-linked (Glc) (glycation) lysine) is linked at Lys-78. At Gln-90 the chain carries Deamidated glutamine; partial. At Lys-99 the chain carries N6-acetyllysine. A Zn(2+)-binding site is contributed by His-100. Asn-101 carries the deamidated asparagine; partial modification. Glu-102 and His-107 together coordinate Zn(2+). Ser-122 is modified (phosphoserine). Asn-123 carries the post-translational modification Deamidated asparagine; partial. Residues 144 to 173 (PKIPSGVDAGHSERAIPVSREEKPSSAPSS) form a disordered region. Residues 153-167 (GHSERAIPVSREEKP) show a composition bias toward basic and acidic residues. His-154 provides a ligand contact to Zn(2+). An important for oligomerization region spans residues 157 to 163 (RAIPVSR). Ser-162 is a glycosylation site (O-linked (GlcNAc) serine).

The protein belongs to the small heat shock protein (HSP20) family. In terms of assembly, heteromer composed of three CRYAA and one CRYAB subunits. Inter-subunit bridging via zinc ions enhances stability, which is crucial as there is no protein turn over in the lens. Can also form homodimers and homotetramers (dimers of dimers) which serve as the building blocks of homooligomers. Within homooligomers, the zinc-binding motif is created from residues of 3 different molecules. His-100 and Glu-102 from one molecule are ligands of the zinc ion, and His-107 and His-154 residues from additional molecules complete the site with tetrahedral coordination geometry. Part of a complex required for lens intermediate filament formation composed of BFSP1, BFSP2 and CRYAA. In terms of processing, acetylation at Lys-70 may increase chaperone activity. Post-translationally, undergoes age-dependent proteolytical cleavage at the C-terminus.

Its subcellular location is the cytoplasm. The protein resides in the nucleus. Functionally, contributes to the transparency and refractive index of the lens. Acts as a chaperone, preventing aggregation of various proteins under a wide range of stress conditions. Required for the correct formation of lens intermediate filaments as part of a complex composed of BFSP1, BFSP2 and CRYAA. This chain is Alpha-crystallin A chain (CRYAA), found in Bos taurus (Bovine).